A 1028-amino-acid polypeptide reads, in one-letter code: Pro-apoptotic serine protease NMA111 (1028 aa).

Residues 1 to 10 (MEMSSKRKHS) show a composition bias toward basic residues. The interval 1–39 (MEMSSKRKHSSGPISLRSTKHLRSDTAASPQPLTPDDQT) is disordered. The segment at 85-269 (VVSIHFCQTA…AATDYFLPLD (185 aa)) is serine protease. Active-site charge relay system residues include histidine 123, aspartate 154, and serine 236. 2 PDZ domains span residues 292–377 (QWII…LLVQ) and 878–959 (IFCG…VTFD). The interval 1003–1028 (SDNLNADAMDEGRDDGISDMEPDGEK) is disordered. Positions 1019 to 1028 (ISDMEPDGEK) are enriched in acidic residues.

It belongs to the peptidase S1C family.

It is found in the nucleus. Nuclear serine protease which mediates apoptosis. The chain is Pro-apoptotic serine protease NMA111 (NMA111) from Ajellomyces capsulatus (strain NAm1 / WU24) (Darling's disease fungus).